Reading from the N-terminus, the 307-residue chain is Protoheme IX farnesyltransferase (307 aa).

The next 8 helical transmembrane spans lie at 24–44 (ISLL…VGLV), 52–72 (PVIA…AGAL), 115–135 (VVLG…TIFF), 152–172 (IVIG…AASG), 179–199 (VILV…LSLY), 224–244 (QILL…MLGE), 245–265 (AGLA…LLAV), and 284–304 (FGFS…EALV).

Belongs to the UbiA prenyltransferase family. Protoheme IX farnesyltransferase subfamily.

It localises to the cell inner membrane. The catalysed reaction is heme b + (2E,6E)-farnesyl diphosphate + H2O = Fe(II)-heme o + diphosphate. It participates in porphyrin-containing compound metabolism; heme O biosynthesis; heme O from protoheme: step 1/1. In terms of biological role, converts heme B (protoheme IX) to heme O by substitution of the vinyl group on carbon 2 of heme B porphyrin ring with a hydroxyethyl farnesyl side group. This is Protoheme IX farnesyltransferase from Azorhizobium caulinodans (strain ATCC 43989 / DSM 5975 / JCM 20966 / LMG 6465 / NBRC 14845 / NCIMB 13405 / ORS 571).